Consider the following 210-residue polypeptide: 3-hexulose-6-phosphate synthase (210 aa).

It belongs to the HPS/KGPDC family. HPS subfamily.

The catalysed reaction is D-ribulose 5-phosphate + formaldehyde = D-arabino-hex-3-ulose 6-phosphate. It participates in one-carbon metabolism; formaldehyde assimilation via RuMP pathway; D-fructose 6-phosphate from D-ribulose 5-phosphate and formaldehyde: step 1/2. In terms of biological role, catalyzes the condensation of ribulose 5-phosphate with formaldehyde to form 3-hexulose 6-phosphate. This Staphylococcus aureus (strain MRSA252) protein is 3-hexulose-6-phosphate synthase.